A 212-amino-acid polypeptide reads, in one-letter code: Ribosome maturation factor RimM (212 aa).

The PRC barrel domain maps to 105 to 181 (EEEFYYADLI…IDSITAGLDN (77 aa)). The interval 181–212 (NAELSGEEDEAEGPESARGSRPRGPKSAGEPR) is disordered.

This sequence belongs to the RimM family. Binds ribosomal protein uS19.

The protein localises to the cytoplasm. An accessory protein needed during the final step in the assembly of 30S ribosomal subunit, possibly for assembly of the head region. Essential for efficient processing of 16S rRNA. May be needed both before and after RbfA during the maturation of 16S rRNA. It has affinity for free ribosomal 30S subunits but not for 70S ribosomes. This chain is Ribosome maturation factor RimM, found in Chelativorans sp. (strain BNC1).